The following is a 227-amino-acid chain: Probable GTP-binding protein EngB (227 aa).

The region spanning 41 to 216 is the EngB-type G domain; sequence GRPEVAFAGR…RAEIARFAVP (176 aa). Residues 49-56, 76-80, 94-97, 161-164, and 195-197 each bind GTP; these read GRSNVGKS, GRTKQ, DMPG, TKCD, and TSS. Residues serine 56 and threonine 78 each contribute to the Mg(2+) site.

The protein belongs to the TRAFAC class TrmE-Era-EngA-EngB-Septin-like GTPase superfamily. EngB GTPase family. Mg(2+) is required as a cofactor.

In terms of biological role, necessary for normal cell division and for the maintenance of normal septation. The polypeptide is Probable GTP-binding protein EngB (Gluconobacter oxydans (strain 621H) (Gluconobacter suboxydans)).